Consider the following 832-residue polypeptide: MWPQPHLPTHPHLPTHPHLPTHPHLPTHPHLPTHPMMSKETRQSKLAEAKEQLTDHHPQTNPSVGTAASDTKKKKINNGTNPETTTSGGCHSPEDEQKASHQHQEALRRELEAQVQTIRILTCQKTELQMALYYSQHAVKQLEGEARDLISRLHDSWKFAGELEQALSAVATQKKKADRYIEELTKERDALSLELYRNTITDEELKEKNAKLQEKLQLVESEKSEIQLNVKELKRKLERAKLLLPQQQLQAEADHLGKELQSVSAKLQAQVEENELWNRLNQQQEEKMWRQEEKIQEREEKIQEQEEKIREQEEKMRRQEEMMWEKEEKMRRQEEMMWEKEEKIRELEEKMHEQEKIREQEEKRQEEEKIREQEKRQEQEAKMWRQEEKIREQEEKIREQEKKMWRQEEKIHEQEKIREEEKRQEQEEMWRQEEKIREQEEIWRQKEKMHEQEEKIRKQEEKVWRQEEKMHDQEEKIREQEEKVWRQEEKIREQEEKMWRQEEKIREQEEMWREEEKMHEQEKIWEEEKRQEQEDKMWRQEEKIREQEEKVWRQEEKIREQEEKRQEQEEKMWKQEEKIREQEEKTREQEKIREQEEKIREQEEMMQEQEEKMGEQEEKMQEQEKMRRQEEKIREQEEKIREQKEKIREQEEKIWEQEEKIREQEEMMQEQEEKMGEQEEKMWEQEEEMQEQEEKMRRQEEKIREQEKKIREQEEKIREQEEMMQEQEEKMGEQEGKMCEQEAKMQEQEEKMRRQEEKIREQEKKIREQEEKIREQEEMMQEQEEKMWEQEEKMCEQEEKMQEQEEKMRRQEEKMREQEVRLRQQEEKMQEH.

5 disordered regions span residues 1-107, 303-333, 351-431, 508-652, and 664-832; these read MWPQ…QEAL, QEQEEKIREQEEKMRRQEEMMWEKEEKMRRQ, MHEQ…EMWR, QEEM…EQEE, and QEEM…MQEH. Positions 13-27 are enriched in basic residues; the sequence is LPTHPHLPTHPHLPT. Residues 37 to 58 are compositionally biased toward basic and acidic residues; it reads MSKETRQSKLAEAKEQLTDHHP. 2 stretches are compositionally biased toward polar residues: residues 59-69 and 77-89; these read QTNPSVGTAAS and NNGTNPETTTSGG. Over residues 92–107 the composition is skewed to basic and acidic residues; it reads SPEDEQKASHQHQEAL. A coiled-coil region spans residues 163–828; that stretch reads LEQALSAVAT…EVRLRQQEEK (666 aa). Basic and acidic residues-rich tracts occupy residues 664–684 and 692–832; these read QEEMMQEQEEKMGEQEEKMWE and QEEK…MQEH.

The protein belongs to the GOLGA6 family.

In Homo sapiens (Human), this protein is Golgin subfamily A member 6-like protein 24.